Here is a 1755-residue protein sequence, read N- to C-terminus: Transposon Ty1-ML2 Gag-Pol polyprotein (1755 aa).

Positions 1–16 are enriched in low complexity; it reads MESQQLSQHSHISHGS. Disordered stretches follow at residues 1–93, 126–173, and 352–421; these read MESQ…MMTQ, PQSQ…RPPP, and GSRN…SKST. 2 stretches are compositionally biased toward polar residues: residues 48-60 and 127-152; these read TKAN…TPAS and QSQF…GNTF. Low complexity predominate over residues 153–165; that stretch reads TDSSSADSDMTST. An RNA-binding region spans residues 299–401; it reads NNGIHINNKV…NSKSKTARAH (103 aa). Positions 402-418 are enriched in low complexity; sequence NVSTSNNSPSTDNDSIS. S416 is modified (phosphoserine). D461 functions as the For protease activity; shared with dimeric partner in the catalytic mechanism. The tract at residues 583-640 is integrase-type zinc finger-like; it reads NVHTSESTRKYPYPFIHRMLAHANAQTIRYSLKNNTITYFNESDVDRSSAIDYQCPDC. Residues 660–835 form the Integrase catalytic domain; that stretch reads NSYEPFQYLH…AGLDISTLLP (176 aa). Residues D671 and D736 each coordinate Mg(2+). 3 disordered regions span residues 956-1087, 1092-1111, and 1130-1171; these read SKAV…ETEK, RSPS…NIVP, and DLPL…DSNA. A compositionally biased stretch (low complexity) spans 960 to 969; it reads SPTDSTPPST. Polar residues predominate over residues 1005–1015; that stretch reads STPQISNIEST. Residues 1038–1053 are compositionally biased toward basic and acidic residues; it reads ESSHASKSKDFRHSDS. 2 stretches are compositionally biased toward polar residues: residues 1054–1082 and 1101–1111; these read YSEN…QISD and PENNSSHNIVP. The Bipartite nuclear localization signal signature appears at 1178 to 1212; the sequence is KKRSLEDNETEIKVSRDTWNTKNMRSLEPPRSKKR. Positions 1338–1476 constitute a Reverse transcriptase Ty1/copia-type domain; it reads NNYYITQLDI…DILGLEIKYQ (139 aa). D1346, D1427, D1428, D1610, E1652, and D1685 together coordinate Mg(2+). The RNase H Ty1/copia-type domain occupies 1610 to 1752; sequence DASYGNQPYY…IKTFKLLTNK (143 aa).

The capsid protein forms a homotrimer, from which the VLPs are assembled. The protease is a homodimer, whose active site consists of two apposed aspartic acid residues. Initially, virus-like particles (VLPs) are composed of the structural unprocessed proteins Gag and Gag-Pol, and also contain the host initiator methionine tRNA (tRNA(i)-Met) which serves as a primer for minus-strand DNA synthesis, and a dimer of genomic Ty RNA. Processing of the polyproteins occurs within the particle and proceeds by an ordered pathway, called maturation. First, the protease (PR) is released by autocatalytic cleavage of the Gag-Pol polyprotein yielding capsid protein p45 and a Pol-p154 precursor protein. This cleavage is a prerequisite for subsequent processing of Pol-p154 at the remaining sites to release the mature structural and catalytic proteins. Maturation takes place prior to the RT reaction and is required to produce transposition-competent VLPs.

The protein resides in the cytoplasm. The protein localises to the nucleus. It catalyses the reaction DNA(n) + a 2'-deoxyribonucleoside 5'-triphosphate = DNA(n+1) + diphosphate. The catalysed reaction is Endonucleolytic cleavage to 5'-phosphomonoester.. Functionally, capsid protein (CA) is the structural component of the virus-like particle (VLP), forming the shell that encapsulates the retrotransposons dimeric RNA genome. The particles are assembled from trimer-clustered units and there are holes in the capsid shells that allow for the diffusion of macromolecules. CA also has nucleocapsid-like chaperone activity, promoting primer tRNA(i)-Met annealing to the multipartite primer-binding site (PBS), dimerization of Ty1 RNA and initiation of reverse transcription. Its function is as follows. The aspartyl protease (PR) mediates the proteolytic cleavages of the Gag and Gag-Pol polyproteins after assembly of the VLP. In terms of biological role, reverse transcriptase/ribonuclease H (RT) is a multifunctional enzyme that catalyzes the conversion of the retro-elements RNA genome into dsDNA within the VLP. The enzyme displays a DNA polymerase activity that can copy either DNA or RNA templates, and a ribonuclease H (RNase H) activity that cleaves the RNA strand of RNA-DNA heteroduplexes during plus-strand synthesis and hydrolyzes RNA primers. The conversion leads to a linear dsDNA copy of the retrotransposon that includes long terminal repeats (LTRs) at both ends. Integrase (IN) targets the VLP to the nucleus, where a subparticle preintegration complex (PIC) containing at least integrase and the newly synthesized dsDNA copy of the retrotransposon must transit the nuclear membrane. Once in the nucleus, integrase performs the integration of the dsDNA into the host genome. This Saccharomyces cerevisiae (strain ATCC 204508 / S288c) (Baker's yeast) protein is Transposon Ty1-ML2 Gag-Pol polyprotein (TY1B-ML2).